Reading from the N-terminus, the 276-residue chain is ARL14 effector protein (276 aa).

The segment at 159-183 is disordered; that stretch reads QTEFAPESGKREKRKLTKNASASSD. K176 participates in a covalent cross-link: Glycyl lysine isopeptide (Lys-Gly) (interchain with G-Cter in SUMO2). S182 and S266 each carry phosphoserine.

Interacts with ARL14 and MYO1E.

Its subcellular location is the cytoplasm. Its function is as follows. Through its interaction with ARL14 and MYO1E, may connect MHC class II-containing cytoplasmic vesicles to the actin network and hence controls the movement of these vesicles along the actin cytoskeleton in dendritic cells. The sequence is that of ARL14 effector protein (Arl14ep) from Rattus norvegicus (Rat).